A 294-amino-acid chain; its full sequence is HTH-type transcriptional regulator ClcR (294 aa).

Residues M1–T58 form the HTH lysR-type domain. A DNA-binding region (H-T-H motif) is located at residues I18–Q37.

The protein belongs to the LysR transcriptional regulatory family.

It is found in the cytoplasm. In terms of biological role, involved in regulation of chlorinated catechol metabolism. Transcriptional activator of the clcABD chlorocatechol oxidative operon. The polypeptide is HTH-type transcriptional regulator ClcR (clcR) (Pseudomonas putida (Arthrobacter siderocapsulatus)).